Here is a 144-residue protein sequence, read N- to C-terminus: Deoxyuridine 5'-triphosphate nucleotidohydrolase (144 aa).

Substrate is bound by residues 63-65, Asn-76, and 80-82; these read RSG and TID.

Belongs to the dUTPase family. The cofactor is Mg(2+).

The enzyme catalyses dUTP + H2O = dUMP + diphosphate + H(+). It participates in pyrimidine metabolism; dUMP biosynthesis; dUMP from dCTP (dUTP route): step 2/2. Its function is as follows. This enzyme is involved in nucleotide metabolism: it produces dUMP, the immediate precursor of thymidine nucleotides and it decreases the intracellular concentration of dUTP so that uracil cannot be incorporated into DNA. The sequence is that of Deoxyuridine 5'-triphosphate nucleotidohydrolase from Phocaeicola vulgatus (strain ATCC 8482 / DSM 1447 / JCM 5826 / CCUG 4940 / NBRC 14291 / NCTC 11154) (Bacteroides vulgatus).